Reading from the N-terminus, the 52-residue chain is MPQMMPMKWFLIYFIYLLIFYLFIMLINSMLIKTKINKETLKIKLKKWNWFW.

A helical membrane pass occupies residues 7–27 (MKWFLIYFIYLLIFYLFIMLI).

The protein belongs to the ATPase protein 8 family. As to quaternary structure, F-type ATPases have 2 components, CF(1) - the catalytic core - and CF(0) - the membrane proton channel.

The protein resides in the mitochondrion membrane. In terms of biological role, mitochondrial membrane ATP synthase (F(1)F(0) ATP synthase or Complex V) produces ATP from ADP in the presence of a proton gradient across the membrane which is generated by electron transport complexes of the respiratory chain. F-type ATPases consist of two structural domains, F(1) - containing the extramembraneous catalytic core and F(0) - containing the membrane proton channel, linked together by a central stalk and a peripheral stalk. During catalysis, ATP synthesis in the catalytic domain of F(1) is coupled via a rotary mechanism of the central stalk subunits to proton translocation. Part of the complex F(0) domain. Minor subunit located with subunit a in the membrane. The sequence is that of ATP synthase protein 8 (mt:ATPase8) from Apis mellifera ligustica (Common honeybee).